A 136-amino-acid chain; its full sequence is Small ribosomal subunit protein uS11 (136 aa).

Disordered stretches follow at residues 1 to 20 (MAQR…NVTN) and 115 to 136 (VTPQ…EKAR). A compositionally biased stretch (basic residues) spans 125–136 (PPKRVLKREKAR).

Belongs to the universal ribosomal protein uS11 family. As to quaternary structure, part of the 30S ribosomal subunit. Interacts with proteins S7 and S18. Binds to IF-3.

Located on the platform of the 30S subunit, it bridges several disparate RNA helices of the 16S rRNA. Forms part of the Shine-Dalgarno cleft in the 70S ribosome. The chain is Small ribosomal subunit protein uS11 from Mycoplasmopsis pulmonis (strain UAB CTIP) (Mycoplasma pulmonis).